The primary structure comprises 339 residues: Phenylalanine--tRNA ligase alpha subunit (339 aa).

Residue E254 coordinates Mg(2+).

It belongs to the class-II aminoacyl-tRNA synthetase family. Phe-tRNA synthetase alpha subunit type 1 subfamily. As to quaternary structure, tetramer of two alpha and two beta subunits. Requires Mg(2+) as cofactor.

It is found in the cytoplasm. The catalysed reaction is tRNA(Phe) + L-phenylalanine + ATP = L-phenylalanyl-tRNA(Phe) + AMP + diphosphate + H(+). The protein is Phenylalanine--tRNA ligase alpha subunit of Dictyoglomus turgidum (strain DSM 6724 / Z-1310).